Reading from the N-terminus, the 210-residue chain is Glutathione S-transferase P (210 aa).

The GST N-terminal domain occupies 2-81 (PPYTIVYFPV…HLGRSLGLYG (80 aa)). Phosphotyrosine; by EGFR is present on Tyr-4. Residues Tyr-8, Arg-14, Trp-39, Lys-45, and 52–53 (QL) each bind glutathione. Residue Thr-62 is modified to Phosphothreonine. A glutathione-binding site is contributed by 65–66 (QS). A GST C-terminal domain is found at 83 to 204 (DQKEAALVDM…SSPDHLNRPI (122 aa)). Lys-103 and Lys-116 each carry N6-succinyllysine. Lys-128 is subject to N6-acetyllysine.

Belongs to the GST superfamily. Pi family. Homodimer. Interacts with CDK5. In terms of tissue distribution, present in kidney, lung, testis and placenta, very low levels in liver.

Its subcellular location is the cytoplasm. The protein resides in the mitochondrion. It is found in the nucleus. It catalyses the reaction RX + glutathione = an S-substituted glutathione + a halide anion + H(+). The catalysed reaction is prostaglandin J2 + glutathione = prostaglandin J2-S-(R)-glutathione. It carries out the reaction prostaglandin J2 + glutathione = prostaglandin J2-S-(S)-glutathione. The enzyme catalyses prostaglandin A2 + glutathione = prostaglandin A2-S-(S)-glutathione. It catalyses the reaction 11(S)-hydroxy-14(S),15(S)-epoxy-(5Z,8Z,12E)-eicosatrienoate + glutathione = (11S,15S)-dihydroxy-14(R)-S-glutathionyl-(5Z,8Z,12E)-eicosatrienoate. Functionally, conjugation of reduced glutathione to a wide number of exogenous and endogenous hydrophobic electrophiles. Involved in the formation of glutathione conjugates of both prostaglandin A2 (PGA2) and prostaglandin J2 (PGJ2). Participates in the formation of novel hepoxilin regioisomers. Negatively regulates CDK5 activity via p25/p35 translocation to prevent neurodegeneration. The protein is Glutathione S-transferase P of Rattus norvegicus (Rat).